A 397-amino-acid polypeptide reads, in one-letter code: Elongation factor Tu (397 aa).

Residues 10–206 form the tr-type G domain; the sequence is KPHVNIGTIG…EVDAYIPTPE (197 aa). A G1 region spans residues 19–26; it reads GHVDHGKT. GTP is bound at residue 19–26; that stretch reads GHVDHGKT. Thr26 lines the Mg(2+) pocket. Residues 60 to 64 are G2; sequence GITIN. The interval 81–84 is G3; it reads DCPG. GTP contacts are provided by residues 81–85 and 136–139; these read DCPGH and NKAD. Positions 136-139 are G4; that stretch reads NKAD. The tract at residues 174 to 176 is G5; sequence SAL.

This sequence belongs to the TRAFAC class translation factor GTPase superfamily. Classic translation factor GTPase family. EF-Tu/EF-1A subfamily. Monomer.

The protein resides in the cytoplasm. The enzyme catalyses GTP + H2O = GDP + phosphate + H(+). In terms of biological role, GTP hydrolase that promotes the GTP-dependent binding of aminoacyl-tRNA to the A-site of ribosomes during protein biosynthesis. This chain is Elongation factor Tu, found in Clostridium acetobutylicum (strain ATCC 824 / DSM 792 / JCM 1419 / IAM 19013 / LMG 5710 / NBRC 13948 / NRRL B-527 / VKM B-1787 / 2291 / W).